A 441-amino-acid chain; its full sequence is GTPase Der (441 aa).

EngA-type G domains follow at residues 4–169 (PVVA…PEDI) and 178–353 (IKVA…DQAA). Residues 10–17 (GRPNVGKS), 57–61 (DTGGI), 120–123 (NKVD), 184–191 (GKPNAGKS), 231–235 (DTAGI), and 296–299 (NKWD) contribute to the GTP site. The region spanning 354 to 438 (FRISTGMLND…PIRFIHRQRE (85 aa)) is the KH-like domain.

The protein belongs to the TRAFAC class TrmE-Era-EngA-EngB-Septin-like GTPase superfamily. EngA (Der) GTPase family. In terms of assembly, associates with the 50S ribosomal subunit.

Its function is as follows. GTPase that plays an essential role in the late steps of ribosome biogenesis. This Ruminiclostridium cellulolyticum (strain ATCC 35319 / DSM 5812 / JCM 6584 / H10) (Clostridium cellulolyticum) protein is GTPase Der.